The primary structure comprises 116 residues: NADH-ubiquinone oxidoreductase chain 3 (116 aa).

3 helical membrane-spanning segments follow: residues 3 to 23 (LFATILIIMTTLSLVLALVSF), 56 to 76 (FFLVAVLFPLFDLEIALLLPL), and 88 to 108 (TLFWAMTVLILLTLGLAYEWA).

This sequence belongs to the complex I subunit 3 family. In terms of assembly, core subunit of respiratory chain NADH dehydrogenase (Complex I) which is composed of 45 different subunits.

Its subcellular location is the mitochondrion inner membrane. It carries out the reaction a ubiquinone + NADH + 5 H(+)(in) = a ubiquinol + NAD(+) + 4 H(+)(out). Its function is as follows. Core subunit of the mitochondrial membrane respiratory chain NADH dehydrogenase (Complex I) which catalyzes electron transfer from NADH through the respiratory chain, using ubiquinone as an electron acceptor. Essential for the catalytic activity of complex I. The protein is NADH-ubiquinone oxidoreductase chain 3 (mt-nd3) of Danio rerio (Zebrafish).